A 757-amino-acid polypeptide reads, in one-letter code: Exo-alpha-(1-&gt;6)-L-arabinopyranosidase (757 aa).

Residue Asp-232 is part of the active site.

It belongs to the glycosyl hydrolase 3 family. Homotetramer.

Completely inhibited by Cu(2+) and Fe(2+). In terms of biological role, catalyzes the hydrolysis of a non-reducing terminal alpha-L-arabinopyranosidic linkage in ginsenoside Rb2 (alpha-L-arabinopyranosyl-(1-&gt;6)-alpha-D-glucopyranosyl) to release alpha-D-glucopyranosyl (Rd). It is not able to hydrolyze alpha-L-arabinofuranosyl-(1-&gt;6)-alpha-D-glucopyranosyl (Rc). This chain is Exo-alpha-(1-&gt;6)-L-arabinopyranosidase, found in Bifidobacterium breve (strain ACS-071-V-Sch8b).